Consider the following 953-residue polypeptide: MITSAAGIISLLDEEEPQLKEFALHKLNAVVNDFWAEISESVDKIEVLYEDEGFRSRQFAALVASKVFYHLGAFEESLNYALGAGDLFNVNDNSEYVETIIAKCIDHYTKQCVENADLPEGEKKPIDQRLEGIVNKMFQRCLDDHKYKQAIGIALETRRLDVFEKTILESNDVPGMLAYSLKLCMSLMQNKQFRNKVLRVLVKIYMNLEKPDFINVCQCLIFLDDPQAVSDILEKLVKEDNLLMAYQICFDLYESASQQFLSSVIQNLRTVGTPIASVPGSTNTGTVPGSEKDSDPMETEEKTASAVAGKTPDASPEPKDQTLKMIKILSGEMAIELHLQFLIRNNNTDLMILKNTKDAVRNSVCHTATVIANSFMHCGTTSDQFLRDNLEWLARATNWAKFTATASLGVIHKGHEKEALQLMATYLPKDTSPGSAYQEGGGLYALGLIHANHGGDIIDYLLNQLKNASNDIVRHGGSLGLGLAAMGTARQDVYDLLKTNLYQDDAVTGEAAGLALGLVMLGSKNAQAIEDMVGYAQETQHEKILRGLAVGIALVMYGRMEEADALIESLCRDKDPILRRSGMYTVAMAYCGSGNNKAIRRLLHVAVSDVNDDVRRAAVESLGFILFRTPEQCPSVVSLLSESYNPHVRYGAAMALGICCAGTGNKEAINLLEPMTNDPVNYVRQGALIASALIMIQQTEITCPKVNQFRQLYSKVINDKHDDVMAKFGAILAQGILDAGGHNVTISLQSRTGHTHMPSVVGVLVFTQFWFWFPLSHFLSLAYTPTCVIGLNKDLKMPKVQYKSNCKPSTFAYPAPLEVPKEKEKEKVSTAVLSITAKAKKKEKEKEKKEEEKMEVDEAEKKEEKEKKKEPEPNFQLLDNPARVMPAQLKVLSMTETCRYQPFKPLSIGGIIILKDTSEDVEELVEPVAAHGPKIEEEEQEPEPPEPFEYIDD.

Residue M1 is modified to N-acetylmethionine. The residue at position 273 (T273) is a Phosphothreonine. Residues 277 to 319 (SVPGSTNTGTVPGSEKDSDPMETEEKTASAVAGKTPDASPEPK) form a disordered region. S290 is modified (phosphoserine). Over residues 290–303 (SEKDSDPMETEEKT) the composition is skewed to basic and acidic residues. N6-acetyllysine is present on K310. At T311 the chain carries Phosphothreonine. The residue at position 315 (S315) is a Phosphoserine. 10 PC repeats span residues 403–436 (TATA…PGSA), 441–474 (GGLY…DIVR), 476–510 (GGSL…VTGE), 511–545 (AAGL…EKIL), 547–580 (GLAV…ILRR), 581–616 (SGMY…DVRR), 617–649 (AAVE…PHVR), 651–685 (GAAM…YVRQ), 686–726 (GALI…DVMA), and 729–761 (GAIL…PSVV). At K720 the chain carries N6-acetyllysine. T830 bears the Phosphothreonine mark. A Phosphoserine modification is found at S834. Disordered regions lie at residues 839–881 (AKKK…LDNP) and 930–953 (AHGP…YIDD). Composition is skewed to basic and acidic residues over residues 842–852 (KEKEKEKKEEE) and 859–872 (AEKK…KEPE). The span at 936–953 (EEEEQEPEPPEPFEYIDD) shows a compositional bias: acidic residues.

Belongs to the proteasome subunit S1 family. In terms of assembly, component of the 19S proteasome regulatory particle complex. The 26S proteasome consists of a 20S core particle (CP) and two 19S regulatory subunits (RP). The regulatory particle is made of a lid composed of 9 subunits, a base containing 6 ATPases and few additional components including PSMD1. Interacts with ADRM1. Interacts with ZFAND1.

Component of the 26S proteasome, a multiprotein complex involved in the ATP-dependent degradation of ubiquitinated proteins. This complex plays a key role in the maintenance of protein homeostasis by removing misfolded or damaged proteins, which could impair cellular functions, and by removing proteins whose functions are no longer required. Therefore, the proteasome participates in numerous cellular processes, including cell cycle progression, apoptosis, or DNA damage repair. The polypeptide is 26S proteasome non-ATPase regulatory subunit 1 (Psmd1) (Mus musculus (Mouse)).